The primary structure comprises 55 residues: MFYIHLENTFDLSSTILVKLPEAYAIFDPIVDVMPIIPLFFFLLAFVWQASVSFR.

Positions 1 to 18 are excised as a propeptide; the sequence is MFYIHLENTFDLSSTILV. The helical transmembrane segment at 26–46 threads the bilayer; sequence IFDPIVDVMPIIPLFFFLLAF.

The protein belongs to the PsbK family. In terms of assembly, PSII is composed of 1 copy each of membrane proteins PsbA, PsbB, PsbC, PsbD, PsbE, PsbF, PsbH, PsbI, PsbJ, PsbK, PsbL, PsbM, PsbT, PsbX, PsbY, PsbZ, Psb30/Ycf12, at least 3 peripheral proteins of the oxygen-evolving complex and a large number of cofactors. It forms dimeric complexes.

The protein localises to the plastid. It is found in the chloroplast thylakoid membrane. Functionally, one of the components of the core complex of photosystem II (PSII). PSII is a light-driven water:plastoquinone oxidoreductase that uses light energy to abstract electrons from H(2)O, generating O(2) and a proton gradient subsequently used for ATP formation. It consists of a core antenna complex that captures photons, and an electron transfer chain that converts photonic excitation into a charge separation. The protein is Photosystem II reaction center protein K of Anthoceros angustus (Hornwort).